A 351-amino-acid chain; its full sequence is Protein RecA (351 aa).

ATP is bound at residue 67–74 (GPESSGKT).

The protein belongs to the RecA family.

The protein resides in the cytoplasm. Its function is as follows. Can catalyze the hydrolysis of ATP in the presence of single-stranded DNA, the ATP-dependent uptake of single-stranded DNA by duplex DNA, and the ATP-dependent hybridization of homologous single-stranded DNAs. It interacts with LexA causing its activation and leading to its autocatalytic cleavage. This Mannheimia succiniciproducens (strain KCTC 0769BP / MBEL55E) protein is Protein RecA.